The chain runs to 363 residues: Type-2 angiotensin II receptor (363 aa).

At 1–45 (MKDNFSFAATSRNITSSLPFDNLNATGTNESAFNCSHKPADKHLE) the chain is on the extracellular side. N-linked (GlcNAc...) asparagine glycosylation is found at N4, N13, N24, N29, and N34. 2 disulfide bridges follow: C35/C290 and C117/C195. Residues 46 to 70 (AIPVLYYMIFVIGFAVNIVVVSLFC) form a helical membrane-spanning segment. Topologically, residues 71–80 (CQKGPKKVSS) are cytoplasmic. Residues 81–104 (IYIFNLAVADLLLLATLPLWATYY) traverse the membrane as a helical segment. Residues Y103 and Y104 each contribute to the angiotensin II site. Topologically, residues 105-114 (SYRYDWLFGP) are extracellular. A helical membrane pass occupies residues 115 to 140 (VMCKVFGSFLTLNMFASIFFITCMSV). The Cytoplasmic segment spans residues 141–159 (DRYQSVIYPFLSQRRNPWQ). Residues 160 to 181 (ASYVVPLVWCMACLSSLPTFYF) form a helical membrane-spanning segment. Residues R182, Y204, and K215 each coordinate angiotensin II. Topologically, residues 182–206 (RDVRTIEYLGVNACIMAFPPEKYAQ) are extracellular. A helical transmembrane segment spans residues 207-232 (WSAGIALMKNILGFIIPLIFIATCYF). Over 233–257 (GIRKHLLKTNSYGKNRITRDQVLKM) the chain is Cytoplasmic. The helical transmembrane segment at 258 to 281 (AAAVVLAFIICWLPFHVLTFLDAL) threads the bilayer. An angiotensin II-binding site is contributed by D279. Residues 282–294 (TWMGIINSCEVIA) lie on the Extracellular side of the membrane. Residues 295–320 (VIDLALPFAILLGFTNSCVNPFLYCF) traverse the membrane as a helical segment. Residue D297 coordinates angiotensin II. At 321–363 (VGNRFQQKLRSVFRVPITWLQGKRETMSCRKSSSLREMDTFVS) the chain is on the cytoplasmic side. The segment at 324–333 (RFQQKLRSVF) is helix VIII. S354 carries the phosphoserine; by PKC modification.

Belongs to the G-protein coupled receptor 1 family. Interacts with MTUS1. As to expression, abundant expression in fetal tissues, immature brain, skin wound and atretic ovarian follicles.

It is found in the cell membrane. Its function is as follows. Receptor for angiotensin II, a vasoconstricting peptide. Signals primarily via a non-canonical G-protein- and beta-arrestin independent pathways. Cooperates with MTUS1 to inhibit ERK2 activation and cell proliferation. In Rattus norvegicus (Rat), this protein is Type-2 angiotensin II receptor.